Here is a 579-residue protein sequence, read N- to C-terminus: Adipocyte plasma membrane-associated protein Hemomucin (579 aa).

Residues 1-6 (MGLLYA) lie on the Cytoplasmic side of the membrane. Residues 7–29 (LRVRIMNFMIFFLLIILMPGLPP) traverse the membrane as a helical segment. Topologically, residues 30–579 (RTTFPFKDYI…INKQGVNVEL (550 aa)) are extracellular. N-linked (GlcNAc...) asparagine glycosylation is found at N213 and N217. The disordered stretch occupies residues 427 to 579 (GLEASIGVPP…INKQGVNVEL (153 aa)). Low complexity predominate over residues 435-529 (PPSKATPKPK…PKPTTTTTPT (95 aa)).

The protein belongs to the strictosidine synthase family. Interacts with sturkopf. O-glycosylated. Glycosylated in the ovary of 4 day old females. In terms of processing, phosphorylated. In terms of tissue distribution, detected in ovaries (at protein level). In larvae, detected in the fat body, salivary glands, imaginal disks and gut (at protein level). In adults, expressed in the cardia, and in regions of the ventriculus including the area posterior to the cardia. In females also expressed in follicle cells.

It localises to the cell membrane. In terms of biological role, transmembrane mucin that may be involved in cellular adhesion and the innate immune response. Membrane-tethered mucins are involved in many cell surface functions and form a physical barrier around cells to regulate cell-cell and/or cell-substrate interactions, and protect against pathogens or harmful extracellular conditions. This mucin likely acts in hemocyte adhesion as it is released from hemocytes during coagulation and is also able to bind lipophorin particles which form part of the hemocyte coagulogen. Able to induce expression of the antibacterial proteins in the presence of GalNAc-specific lectins and so probably also functions in the innate immune response. The chain is Adipocyte plasma membrane-associated protein Hemomucin from Drosophila melanogaster (Fruit fly).